A 372-amino-acid chain; its full sequence is O-methyltransferase bfoE (372 aa).

Trp-186 lines the S-adenosyl-L-methionine pocket. His-285 (proton acceptor) is an active-site residue.

Belongs to the class I-like SAM-binding methyltransferase superfamily. Cation-independent O-methyltransferase family.

It participates in secondary metabolite biosynthesis. In terms of biological role, cytochrome P450 monooxygenase; part of the gene cluster that mediates the biosynthesis of bifonsecin B, a dimeric gamma-naphthopyrone. The first step in the biosynthesis of bifonsecin B is the production of gamma-naphthopyrone precursor YWA1 by the non-reducing polyketide synthase albA, via condensation of one acetyl-CoA starter unit with 6 malonyl-CoA units. YWA1 is then methylated by bfoE at position C-6 to yield foncesin which is further methylated at position C-8 by bfoD to produce fonsecin B. A key enzyme in the biosynthetic pathway is the cytochrome P450 monooxygenase bfoB which catalyzes the oxidative dimerization of fonsecin B to bifonsecin B. Bfob also catalyzes the oxidative dimerization of rubrofusarin B into nigerone. The stereoselectivity of bfoB is influenced by the two natural monomeric substrates; homodimerization of fonsecin B yields a stereochemically pure biaryl, M-foncerine B, while rubrofusarin B yields a mixture of enantiomers M- and P-nigerone. The polypeptide is O-methyltransferase bfoE (Aspergillus brasiliensis (strain CBS 101740 / IMI 381727 / IBT 21946)).